The following is a 369-amino-acid chain: Polycomb group protein FERTILIZATION-INDEPENDENT ENDOSPERM (369 aa).

7 WD repeats span residues 31–73 (EGKK…AISA), 81–123 (DKEE…IHKS), 126–166 (GHGD…CILI), 172–212 (GHRY…TYVE), 238–275 (IHTNYVDCNRWFGDFILSKSVDNEILLWEPQLKENSPG), 287–328 (VPMC…PVLI), and 335–368 (QSKSVIRQTAMSVDGSTILACCEDGTIWRWDVIT).

This sequence belongs to the WD repeat ESC family. Interacts directly with MEA. These two proteins are probably indirectly associated with FIS2. In plants, PcG complexes are probably composed of a member of the EZ family (CLF or MEA), FIE, and a member of the VEFS family (FIS2, VRN2 or EMF2). Component of the plant homeodomain / polycomb repressive complex 2 (PHD-PRC2) large complex during prolonged cold, composed of core PRC2 components (VRN2, EZA1, FIE and MSI1), and three related PHD finger proteins (VIL1, VIL2 and VIN3) that mediates histone H3 trimethylation on 'Lys-27' (H3K27me3). Binds to ALP1. As to expression, expressed in cauline leaves, root and stems. In the male reproductive organ, it is expressed in the developing anther; and is abundant in microspore mother cells, in microsporocytes and in the tapetum, but is absent from vascular bundles, the connective tissue and the filament. It is also absent from pollen grains at subsequent developmental stages. In the developing female reproductive organs, it is highly expressed in all cells of the young ovules primordium before archesporial differentiation. Then, it is highly expressed in the ovule sporophytic tissue and the megaspore mother cell before meiosis, but is absent from placenta or the developing carpel. Then, it decreases.

Its subcellular location is the nucleus. In terms of biological role, polycomb group (PcG) protein. PcG proteins act by forming multiprotein complexes, which are required to maintain the transcriptionally repressive state of homeotic genes throughout development. PcG proteins are not required to initiate repression, but to maintain it during later stages of development. They probably act via the methylation of histones, rendering chromatin heritably changed in its expressibility. Required to prevent the proliferation of the central cell by repressing unknown target genes before fertilization. Probably also involved in floral repression mechanism established during early plant development. Regulates the anteroposterior organization of the endosperm. Interacts with the promoter and represses the transcription of genes such as PHE1, that are paternally active and maternally silenced. The protein is Polycomb group protein FERTILIZATION-INDEPENDENT ENDOSPERM (FIE) of Arabidopsis thaliana (Mouse-ear cress).